Here is a 521-residue protein sequence, read N- to C-terminus: BAR/IMD domain-containing adapter protein 2 (521 aa).

One can recognise an IMD domain in the interval 1 to 250 (MSLSRSEEMH…VQLMQQMGNS (250 aa)). Residues 132–153 (DALDKCQAELKKLRKKSQGSKN) adopt a coiled-coil conformation. Phosphoserine is present on residues S262, S324, S326, and S337. The interval 297 to 370 (APVMNGVSGP…TLPRSSSMAA (74 aa)) is disordered. Low complexity predominate over residues 321–333 (QPKSTSPPQSQSK). At T341 the chain carries Phosphothreonine. Phosphoserine is present on S347. Residues 353–368 (SYATTENKTLPRSSSM) show a composition bias toward polar residues. Position 361 is a phosphothreonine (T361). Residues S367, S385, S396, and S455 each carry the phosphoserine modification. An SH3 domain is found at 375–438 (NGRMRVKAIF…PFSYTRVLDN (64 aa)). The tract at residues 450-471 (QGKSSSTGNLLDKEDLALPPPD) is disordered.

Homodimer. Interacts with CDC42 and RAC1 that have been activated by GTP binding. Interacts with ATN1, ADGRB1, DIAPH1, EPS8, SHANK1, SHANK2, SHANK3, TIAM1, WASF1 and WASF2. Interacts with ENAH after recruitment of CDC42. Phosphorylated on tyrosine residues by INSR in response to insulin treatment.

Its subcellular location is the cytoplasm. The protein localises to the membrane. It is found in the cell projection. It localises to the filopodium. The protein resides in the ruffle. Its subcellular location is the cytoskeleton. Functionally, adapter protein that links membrane-bound small G-proteins to cytoplasmic effector proteins. Necessary for CDC42-mediated reorganization of the actin cytoskeleton and for RAC1-mediated membrane ruffling. Involved in the regulation of the actin cytoskeleton by WASF family members and the Arp2/3 complex. Plays a role in neurite growth. Acts syngeristically with ENAH to promote filipodia formation. Plays a role in the reorganization of the actin cytoskeleton in response to bacterial infection. Participates in actin bundling when associated with EPS8, promoting filopodial protrusions. In Bos taurus (Bovine), this protein is BAR/IMD domain-containing adapter protein 2 (BAIAP2).